A 193-amino-acid chain; its full sequence is MTDEEVLSEFRASEALLEGHFMLSSGRHSGHYLQCARVLMNPERAGRLAMALAQKLPRELRGEIDVVVSPAMGGLIIGHEMGRALGKDAIFLERPDGEFHLRRGFRLEPGAKVLMVEDVVTTGLSSREAIEAVKREGGEVVAEVSLVDRSAGEADLGVPYYALVEINFPTFANGEVPEGLARIPVTKPGSRAK.

Position 117-125 (117-125) interacts with 5-phospho-alpha-D-ribose 1-diphosphate; the sequence is EDVVTTGLS. T121 and R149 together coordinate orotate.

It belongs to the purine/pyrimidine phosphoribosyltransferase family. PyrE subfamily. In terms of assembly, homodimer. Mg(2+) serves as cofactor.

It carries out the reaction orotidine 5'-phosphate + diphosphate = orotate + 5-phospho-alpha-D-ribose 1-diphosphate. The protein operates within pyrimidine metabolism; UMP biosynthesis via de novo pathway; UMP from orotate: step 1/2. In terms of biological role, catalyzes the transfer of a ribosyl phosphate group from 5-phosphoribose 1-diphosphate to orotate, leading to the formation of orotidine monophosphate (OMP). This Erythrobacter litoralis (strain HTCC2594) protein is Orotate phosphoribosyltransferase.